Reading from the N-terminus, the 510-residue chain is GMP synthase [glutamine-hydrolyzing] (510 aa).

In terms of domain architecture, Glutamine amidotransferase type-1 spans glutamine 3–lysine 194. Cysteine 80 serves as the catalytic Nucleophile. Active-site residues include histidine 168 and glutamate 170. The 191-residue stretch at tryptophan 195 to isoleucine 385 folds into the GMPS ATP-PPase domain. Serine 222 to serine 228 lines the ATP pocket.

In terms of assembly, homodimer.

It carries out the reaction XMP + L-glutamine + ATP + H2O = GMP + L-glutamate + AMP + diphosphate + 2 H(+). It participates in purine metabolism; GMP biosynthesis; GMP from XMP (L-Gln route): step 1/1. Its function is as follows. Catalyzes the synthesis of GMP from XMP. This is GMP synthase [glutamine-hydrolyzing] from Elusimicrobium minutum (strain Pei191).